Consider the following 264-residue polypeptide: tRNA (guanine-N(1)-)-methyltransferase (264 aa).

S-adenosyl-L-methionine-binding positions include Gly125 and 145–150; that span reads LGDFVL.

Belongs to the RNA methyltransferase TrmD family. In terms of assembly, homodimer.

It is found in the cytoplasm. The catalysed reaction is guanosine(37) in tRNA + S-adenosyl-L-methionine = N(1)-methylguanosine(37) in tRNA + S-adenosyl-L-homocysteine + H(+). Specifically methylates guanosine-37 in various tRNAs. The chain is tRNA (guanine-N(1)-)-methyltransferase from Burkholderia ambifaria (strain MC40-6).